Reading from the N-terminus, the 174-residue chain is Cytochrome c-550-like protein (174 aa).

The first 37 residues, 1–37, serve as a signal peptide directing secretion; it reads MPGQTQGAKRWRVPGRGWRWAGILLLVWLGLASPAAG. Residues Cys82, Cys85, His86, and Cys136 each coordinate heme c.

This sequence belongs to the cytochrome c family. PsbV subfamily. Heme c is required as a cofactor.

The protein resides in the cellular thylakoid membrane. In terms of biological role, possible low-potential cytochrome c. The polypeptide is Cytochrome c-550-like protein (psbV2) (Synechococcus sp. (strain JA-3-3Ab) (Cyanobacteria bacterium Yellowstone A-Prime)).